We begin with the raw amino-acid sequence, 594 residues long: Protein FAM200C (594 aa).

In Bos taurus (Bovine), this protein is Protein FAM200C (FAM200C).